We begin with the raw amino-acid sequence, 409 residues long: Elongation factor Tu (409 aa).

The region spanning 10-214 (KPHANIGTIG…EVDAYIPTPE (205 aa)) is the tr-type G domain. The G1 stretch occupies residues 19 to 26 (GHVDHGKT). Residue 19-26 (GHVDHGKT) participates in GTP binding. Residue T26 coordinates Mg(2+). A G2 region spans residues 60-64 (GITIN). A G3 region spans residues 81–84 (DCPG). Residues 81-85 (DCPGH) and 136-139 (NKED) each bind GTP. The G4 stretch occupies residues 136–139 (NKED). The segment at 174 to 176 (SAL) is G5.

Belongs to the TRAFAC class translation factor GTPase superfamily. Classic translation factor GTPase family. EF-Tu/EF-1A subfamily. Monomer.

Its subcellular location is the cytoplasm. It carries out the reaction GTP + H2O = GDP + phosphate + H(+). Functionally, GTP hydrolase that promotes the GTP-dependent binding of aminoacyl-tRNA to the A-site of ribosomes during protein biosynthesis. The polypeptide is Elongation factor Tu (Synechococcus elongatus (strain ATCC 33912 / PCC 7942 / FACHB-805) (Anacystis nidulans R2)).